We begin with the raw amino-acid sequence, 518 residues long: Light-independent protochlorophyllide reductase subunit B (518 aa).

D36 is a binding site for [4Fe-4S] cluster. The active-site Proton donor is the D299. 434-435 (GM) contacts substrate.

It belongs to the ChlB/BchB/BchZ family. As to quaternary structure, protochlorophyllide reductase is composed of three subunits; ChlL, ChlN and ChlB. Forms a heterotetramer of two ChlB and two ChlN subunits. The cofactor is [4Fe-4S] cluster.

The protein localises to the plastid. It is found in the chloroplast. It carries out the reaction chlorophyllide a + oxidized 2[4Fe-4S]-[ferredoxin] + 2 ADP + 2 phosphate = protochlorophyllide a + reduced 2[4Fe-4S]-[ferredoxin] + 2 ATP + 2 H2O. It functions in the pathway porphyrin-containing compound metabolism; chlorophyll biosynthesis (light-independent). Functionally, component of the dark-operative protochlorophyllide reductase (DPOR) that uses Mg-ATP and reduced ferredoxin to reduce ring D of protochlorophyllide (Pchlide) to form chlorophyllide a (Chlide). This reaction is light-independent. The NB-protein (ChlN-ChlB) is the catalytic component of the complex. This Adiantum capillus-veneris (Maidenhair fern) protein is Light-independent protochlorophyllide reductase subunit B.